Here is a 50-residue protein sequence, read N- to C-terminus: Photosystem II reaction center protein M (50 aa).

The helical transmembrane segment at 7-27 (GFVASLLFVGIPTIFLIGLFI) threads the bilayer.

The protein belongs to the PsbM family. As to quaternary structure, PSII is composed of 1 copy each of membrane proteins PsbA, PsbB, PsbC, PsbD, PsbE, PsbF, PsbH, PsbI, PsbJ, PsbK, PsbL, PsbM, PsbT, PsbX, PsbY, Psb30/Ycf12, peripheral proteins PsbO, CyanoQ (PsbQ), PsbU, PsbV and a large number of cofactors. It forms dimeric complexes.

The protein localises to the cellular thylakoid membrane. One of the components of the core complex of photosystem II (PSII). PSII is a light-driven water:plastoquinone oxidoreductase that uses light energy to abstract electrons from H(2)O, generating O(2) and a proton gradient subsequently used for ATP formation. It consists of a core antenna complex that captures photons, and an electron transfer chain that converts photonic excitation into a charge separation. This subunit is found at the monomer-monomer interface. The chain is Photosystem II reaction center protein M from Prochlorococcus marinus subsp. pastoris (strain CCMP1986 / NIES-2087 / MED4).